A 337-amino-acid chain; its full sequence is Dihydroorotate dehydrogenase (quinone) (337 aa).

FMN-binding positions include 62-66 (AGLDK) and threonine 86. Substrate is bound at residue lysine 66. A substrate-binding site is contributed by 111–115 (NRFGF). Positions 139 and 172 each coordinate FMN. Residue asparagine 172 participates in substrate binding. Catalysis depends on serine 175, which acts as the Nucleophile. Asparagine 177 contacts substrate. FMN-binding residues include lysine 217 and threonine 245. 246–247 (NT) provides a ligand contact to substrate. Residues glycine 268, glycine 297, and 318 to 319 (YS) contribute to the FMN site.

This sequence belongs to the dihydroorotate dehydrogenase family. Type 2 subfamily. In terms of assembly, monomer. FMN is required as a cofactor.

The protein localises to the cell membrane. The enzyme catalyses (S)-dihydroorotate + a quinone = orotate + a quinol. Its pathway is pyrimidine metabolism; UMP biosynthesis via de novo pathway; orotate from (S)-dihydroorotate (quinone route): step 1/1. Functionally, catalyzes the conversion of dihydroorotate to orotate with quinone as electron acceptor. The chain is Dihydroorotate dehydrogenase (quinone) from Methylobacillus flagellatus (strain ATCC 51484 / DSM 6875 / VKM B-1610 / KT).